The following is a 451-amino-acid chain: MNLEVKKIDTANARLSAKLSVENLEKRYDKIAQKIAPKVKIDGFRRGKVPLSLVKTRYQAQIEQDAQEEMIQEVLKNALKELGIENKDLIGSPNFTKFEKKDTHFEIEADIGLKPTIVLDKIKECVPSVGVEIPNEEKIDERLKQLAKDYAKFVDTDAQRKAQNDDKLTIDFEGFIDNAPFEGGKAENFSLILGSKQMLEDFEKALLGMQAGEEKEFPLTFPSQYHAEHLAGKEALFKVKLRQIQAREALEINDELAKIVLANEENATLKLLKERVEGQLFLENKARLYNEELKEKLIENLDEKIVFDLPKTIIEQEMDLLFRNALYSMQAEGVKSLQESQEKAKEKRESFRNDATKSVKITFIIDALAKEEKIGVHDNEVFQTLYYEAMMTGQNPENLIEQYRKNNMLAAVKMAMIEDRVLTYLLDKNLPKEQQEILEKMRPNAQKTQVG.

A PPIase FKBP-type domain is found at 165 to 250 (DDKLTIDFEG…LRQIQAREAL (86 aa)).

It belongs to the FKBP-type PPIase family. Tig subfamily.

The protein localises to the cytoplasm. It catalyses the reaction [protein]-peptidylproline (omega=180) = [protein]-peptidylproline (omega=0). Its function is as follows. Involved in protein export. Acts as a chaperone by maintaining the newly synthesized protein in an open conformation. Functions as a peptidyl-prolyl cis-trans isomerase. The chain is Trigger factor from Helicobacter pylori (strain Shi470).